Reading from the N-terminus, the 663-residue chain is Rap1 GTPase-activating protein 1 (663 aa).

One can recognise a GoLoco domain in the interval 1–17 (MIEKMQGSRMDEQRCSF). A disordered region spans residues 1–23 (MIEKMQGSRMDEQRCSFPPPLKT). Phe-17 carries the phosphoserine modification. One can recognise a Rap-GAP domain in the interval 181–397 (IVTFDEHVIS…RTRAALLETL (217 aa)). The residue at position 441 (Ser-441) is a Phosphoserine. 2 disordered regions span residues 442–604 (MDAM…PHKR) and 616–645 (SVSTTSGGSSPGPSRSPHPDAGKLGDPACP). Over residues 450–465 (KKPNTVSTSHSGSFAP) the composition is skewed to polar residues. A phosphoserine mark is found at Ser-484, Ser-499, Ser-515, Ser-541, and Ser-542. Residues 535–549 (ENSSTQSSPEMPTTK) show a composition bias toward polar residues. The span at 567–579 (RSSSSASSFASVV) shows a compositional bias: low complexity. Acidic residues predominate over residues 580-591 (EETEGVDGEDTG). Residues 616–630 (SVSTTSGGSSPGPSR) show a composition bias toward low complexity.

As to quaternary structure, homodimer and heterodimer with RAP1B. As to expression, significant expression seen in the brain, kidney and pancreas. Abundant in the cerebral cortex and expressed at much lower levels in the spinal cord. Not detected in the lymphoid tissues.

The protein localises to the golgi apparatus membrane. Its function is as follows. GTPase activator for the nuclear Ras-related regulatory protein RAP-1A (KREV-1), converting it to the putatively inactive GDP-bound state. This Homo sapiens (Human) protein is Rap1 GTPase-activating protein 1 (RAP1GAP).